We begin with the raw amino-acid sequence, 402 residues long: Tyrosine--tRNA ligase (402 aa).

The short motif at 48–57 (PTGSDIHLGH) is the 'HIGH' region element. A 'KMSKS' region motif is present at residues 235 to 239 (KMSKS). Lys238 lines the ATP pocket. The S4 RNA-binding domain maps to 338–402 (AKAFYLVSAV…GKKKFVRLVL (65 aa)).

Belongs to the class-I aminoacyl-tRNA synthetase family. TyrS type 2 subfamily. In terms of assembly, homodimer.

The protein localises to the cytoplasm. It carries out the reaction tRNA(Tyr) + L-tyrosine + ATP = L-tyrosyl-tRNA(Tyr) + AMP + diphosphate + H(+). In terms of biological role, catalyzes the attachment of tyrosine to tRNA(Tyr) in a two-step reaction: tyrosine is first activated by ATP to form Tyr-AMP and then transferred to the acceptor end of tRNA(Tyr). This chain is Tyrosine--tRNA ligase, found in Synechococcus elongatus (strain ATCC 33912 / PCC 7942 / FACHB-805) (Anacystis nidulans R2).